Reading from the N-terminus, the 66-residue chain is Large ribosomal subunit protein uL29 (66 aa).

This sequence belongs to the universal ribosomal protein uL29 family.

The sequence is that of Large ribosomal subunit protein uL29 from Bartonella tribocorum (strain CIP 105476 / IBS 506).